Here is an 818-residue protein sequence, read N- to C-terminus: Rho GTPase-activating protein 44 (818 aa).

The BAR domain occupies 14–249 (QTVGRAEKTE…IKAQQEAWVE (236 aa)). Residues 255 to 445 (KPLEEHLTIS…PIIQHADWFF (191 aa)) form the Rho-GAP domain. Disordered stretches follow at residues 467 to 493 (ANYS…RPLS), 530 to 772 (SSAG…SMST), and 789 to 818 (TLRL…STAL). Residues 479–489 (PADRRQPEQAR) are compositionally biased toward basic and acidic residues. Serine 493 bears the Phosphoserine mark. Residues 563–579 (QPLDSPAAPALSPSGLG) are compositionally biased toward low complexity. A compositionally biased stretch (polar residues) spans 598–611 (GSAQKGSPGSSQGT). Low complexity-rich tracts occupy residues 614–641 (AGTQ…DQSP) and 688–708 (SPYG…LSPA). Positions 731–818 (KPRQRPTLPP…SEEESESTAL (88 aa)) are interaction with BST2. The span at 746–757 (VNLSASSPQSTE) shows a compositional bias: polar residues. The PDZ-binding motif lies at 764–767 (MSPG). Basic and acidic residues predominate over residues 794–809 (PLEHMRRHSVTDKRDS). Serine 809 carries the phosphoserine modification. Residues 815–818 (STAL) carry the PDZ-binding motif.

Interacts with BST2 (via cytoplasmic domain). Interacts (probably via PDZ-binding motif) with SHANK3 (via PDZ domain); the interaction takes place in dendritic spines and promotes GRIA1 exocytosis. Highly expressed in brain. Expressed at weak level in other tissues.

The protein localises to the cell projection. The protein resides in the dendritic spine. Its subcellular location is the recycling endosome. It is found in the presynapse. It localises to the dendrite. Functionally, GTPase-activating protein (GAP) that stimulates the GTPase activity of Rho-type GTPases. Thereby, controls Rho-type GTPases cycling between their active GTP-bound and inactive GDP-bound states. Acts as a GAP at least for CDC42 and RAC1. In neurons, is involved in dendritic spine formation and synaptic plasticity in a specific RAC1-GAP activity. Limits the initiation of exploratory dendritic filopodia. Recruited to actin-patches that seed filopodia, binds specifically to plasma membrane sections that are deformed inward by acto-myosin mediated contractile forces. Acts through GAP activity on RAC1 to reduce actin polymerization necessary for filopodia formation. In association with SHANK3, promotes GRIA1 exocytosis from recycling endosomes and spine morphological changes associated to long-term potentiation. The protein is Rho GTPase-activating protein 44 of Homo sapiens (Human).